We begin with the raw amino-acid sequence, 304 residues long: UDP-3-O-acyl-N-acetylglucosamine deacetylase (304 aa).

The Zn(2+) site is built by His-78, His-237, and Asp-241. His-264 (proton donor) is an active-site residue.

Belongs to the LpxC family. Requires Zn(2+) as cofactor.

It carries out the reaction a UDP-3-O-[(3R)-3-hydroxyacyl]-N-acetyl-alpha-D-glucosamine + H2O = a UDP-3-O-[(3R)-3-hydroxyacyl]-alpha-D-glucosamine + acetate. It functions in the pathway glycolipid biosynthesis; lipid IV(A) biosynthesis; lipid IV(A) from (3R)-3-hydroxytetradecanoyl-[acyl-carrier-protein] and UDP-N-acetyl-alpha-D-glucosamine: step 2/6. In terms of biological role, catalyzes the hydrolysis of UDP-3-O-myristoyl-N-acetylglucosamine to form UDP-3-O-myristoylglucosamine and acetate, the committed step in lipid A biosynthesis. The polypeptide is UDP-3-O-acyl-N-acetylglucosamine deacetylase (Methylococcus capsulatus (strain ATCC 33009 / NCIMB 11132 / Bath)).